We begin with the raw amino-acid sequence, 219 residues long: Probable GTP-binding protein EngB (219 aa).

An EngB-type G domain is found at 24–207 (VQPEIAFAGR…HELIESWLRP (184 aa)). GTP-binding positions include 32–39 (GRSNAGKS), 59–63 (GRTQH), 81–84 (DLPG), 148–151 (TKCD), and 186–188 (FSA). 2 residues coordinate Mg(2+): S39 and T61.

Belongs to the TRAFAC class TrmE-Era-EngA-EngB-Septin-like GTPase superfamily. EngB GTPase family. Mg(2+) serves as cofactor.

Necessary for normal cell division and for the maintenance of normal septation. The chain is Probable GTP-binding protein EngB from Burkholderia cenocepacia (strain HI2424).